The sequence spans 236 residues: uncharacterized protein (236 aa).

An HTH gntR-type domain is found at M1–H69. Positions L29 to E48 form a DNA-binding region, H-T-H motif.

This is an uncharacterized protein from Bacillus subtilis (strain 168).